The chain runs to 200 residues: Lipopolysaccharide core heptose(II)-phosphate phosphatase (200 aa).

The signal sequence occupies residues 1-25; the sequence is MLAFCRSSLKSKKYFIILLALAAIA.

This sequence belongs to the phosphoglycerate mutase family. Ais subfamily.

Its subcellular location is the periplasm. The protein operates within bacterial outer membrane biogenesis; lipopolysaccharide metabolism. In terms of biological role, catalyzes the dephosphorylation of heptose(II) of the outer membrane lipopolysaccharide core. This chain is Lipopolysaccharide core heptose(II)-phosphate phosphatase, found in Shigella flexneri serotype 5b (strain 8401).